The chain runs to 388 residues: Splicing factor 3B subunit 4 (388 aa).

2 consecutive RRM domains span residues 13–91 (ATIY…KASA) and 100–179 (ANIF…YAFK). The tract at residues 244–388 (QPPPLMGMAQ…GMIPPPPPPS (145 aa)) is disordered. Pro residues-rich tracts occupy residues 261–325 (PPVP…PSRF), 333–355 (MPPPPPPGMRYPGGMPPPPPPRY), and 362–388 (MYPPPPPSRPPAPPSGHGMIPPPPPPS).

Belongs to the SF3B4 family.

It localises to the nucleus. In terms of biological role, subunit of the splicing factor SF3B required for 'A' complex assembly formed by the stable binding of U2 snRNP to the branchpoint sequence (BPS) in pre-mRNA. Sequence independent binding of SF3A/SF3B complex upstream of the branch site is essential, it may anchor U2 snRNP to the pre-mRNA. May also be involved in the assembly of the 'E' complex. SF3B4 has been found in complex 'B' and 'C' as well. Belongs also to the minor U12-dependent spliceosome, which is involved in the splicing of rare class of nuclear pre-mRNA intron. The sequence is that of Splicing factor 3B subunit 4 (sap-49) from Caenorhabditis elegans.